Here is a 377-residue protein sequence, read N- to C-terminus: Cilia- and flagella-associated protein 263 (377 aa).

Coiled coils occupy residues 95–243 (LTAD…NQEL) and 280–354 (LRKE…SLKG).

It belongs to the CFAP263 family. Forms a complex with CFAP184; the interaction is required for functional activity in cilia. Interacts with HAP1 and PCM1.

The protein resides in the cytoplasm. The protein localises to the cytoskeleton. It localises to the microtubule organizing center. Its subcellular location is the centrosome. It is found in the centriolar satellite. The protein resides in the cell projection. The protein localises to the cilium. Functionally, component of centriolar satellites contributing to primary cilium formation. In complex with CFAP263, acts as a regulator of ciliary beating that connects radial spoke 3 (RS3) to the inner dynein arm (IDA) and the nexin-dynein regulatory complex (N-DRC). The complex is positioned parallel to N-DRC and forms a connection between the arch at the base of RS3, the IDA tail and N-DRC. The chain is Cilia- and flagella-associated protein 263 from Homo sapiens (Human).